Consider the following 196-residue polypeptide: Glycerol-3-phosphate acyltransferase (196 aa).

Helical transmembrane passes span 1–21 (MIILAALLAYILGSVPFGYLT), 53–73 (AITAIGDVGKGMLAVYIGSLL), 78–98 (GALVASFFVVIGHAYSIFLKF), 112–132 (IMTSIKVTVVVFFIWLTVMLI), and 152–172 (LLFGLDLSYIYLGIFLAVMIF).

Belongs to the PlsY family. Probably interacts with PlsX.

The protein localises to the cell membrane. The enzyme catalyses an acyl phosphate + sn-glycerol 3-phosphate = a 1-acyl-sn-glycero-3-phosphate + phosphate. It participates in lipid metabolism; phospholipid metabolism. Its function is as follows. Catalyzes the transfer of an acyl group from acyl-phosphate (acyl-PO(4)) to glycerol-3-phosphate (G3P) to form lysophosphatidic acid (LPA). This enzyme utilizes acyl-phosphate as fatty acyl donor, but not acyl-CoA or acyl-ACP. The sequence is that of Glycerol-3-phosphate acyltransferase from Carboxydothermus hydrogenoformans (strain ATCC BAA-161 / DSM 6008 / Z-2901).